Consider the following 227-residue polypeptide: DnaJ homolog subfamily B member 8 (227 aa).

Positions 3–69 (NYYEVLGVQS…KKRSVYDRAG (67 aa)) constitute a J domain.

Interacts with histone deacetylases HDAC4, HDAC6, and SIRT2, HDAC activity is required for antiaggregation.

Functionally, efficient suppressor of aggregation and toxicity of disease-associated polyglutamine proteins. In Mus musculus (Mouse), this protein is DnaJ homolog subfamily B member 8 (Dnajb8).